The primary structure comprises 112 residues: uncharacterized protein (112 aa).

Residues 82-104 (IFFGFSIIASYFLKFHLLYVILL) traverse the membrane as a helical segment.

It is found in the membrane. This is an uncharacterized protein from Pasteurella multocida (strain Pm70).